The primary structure comprises 89 residues: Small ribosomal subunit protein uS15 (89 aa).

The protein belongs to the universal ribosomal protein uS15 family. As to quaternary structure, part of the 30S ribosomal subunit. Forms a bridge to the 50S subunit in the 70S ribosome, contacting the 23S rRNA.

Its function is as follows. One of the primary rRNA binding proteins, it binds directly to 16S rRNA where it helps nucleate assembly of the platform of the 30S subunit by binding and bridging several RNA helices of the 16S rRNA. In terms of biological role, forms an intersubunit bridge (bridge B4) with the 23S rRNA of the 50S subunit in the ribosome. This is Small ribosomal subunit protein uS15 from Cupriavidus metallidurans (strain ATCC 43123 / DSM 2839 / NBRC 102507 / CH34) (Ralstonia metallidurans).